A 269-amino-acid chain; its full sequence is uncharacterized protein (269 aa).

The region spanning 152-197 (RYFSKPAYRNAFKANTIRATTAYKKVFNDPSLGSTYPLEVPLGKMS) is the RPE1 insert domain.

This is an uncharacterized protein from Rickettsia prowazekii (strain Madrid E).